Here is a 186-residue protein sequence, read N- to C-terminus: Threonylcarbamoyl-AMP synthase (186 aa).

In terms of domain architecture, YrdC-like spans 5-186 (LLTIKAAAKL…WEAQTQKRLR (182 aa)).

This sequence belongs to the SUA5 family. TsaC subfamily.

Its subcellular location is the cytoplasm. The enzyme catalyses L-threonine + hydrogencarbonate + ATP = L-threonylcarbamoyladenylate + diphosphate + H2O. In terms of biological role, required for the formation of a threonylcarbamoyl group on adenosine at position 37 (t(6)A37) in tRNAs that read codons beginning with adenine. Catalyzes the conversion of L-threonine, HCO(3)(-)/CO(2) and ATP to give threonylcarbamoyl-AMP (TC-AMP) as the acyladenylate intermediate, with the release of diphosphate. The chain is Threonylcarbamoyl-AMP synthase from Hydrogenovibrio crunogenus (strain DSM 25203 / XCL-2) (Thiomicrospira crunogena).